Consider the following 89-residue polypeptide: Small ribosomal subunit protein uS17 (89 aa).

This sequence belongs to the universal ribosomal protein uS17 family. As to quaternary structure, part of the 30S ribosomal subunit.

One of the primary rRNA binding proteins, it binds specifically to the 5'-end of 16S ribosomal RNA. The sequence is that of Small ribosomal subunit protein uS17 from Novosphingobium aromaticivorans (strain ATCC 700278 / DSM 12444 / CCUG 56034 / CIP 105152 / NBRC 16084 / F199).